The primary structure comprises 186 residues: Meiotically up-regulated gene 163 protein (186 aa).

The protein resides in the mitochondrion. Has a role in meiosis. This chain is Meiotically up-regulated gene 163 protein (mug163), found in Schizosaccharomyces pombe (strain 972 / ATCC 24843) (Fission yeast).